The following is a 390-amino-acid chain: Phosphoprotein (390 aa).

Phosphothreonine occurs at positions 10 and 16. Polar residues predominate over residues Q54 to Q65. Disordered stretches follow at residues Q54 to F98 and R144 to S183. A Phosphoserine modification is found at S69. 3 positions are modified to phosphothreonine: T91, T150, and T164. S187 is modified (phosphoserine). T249 carries the phosphothreonine modification. S256 is subject to Phosphoserine. A phosphothreonine mark is found at T257 and T281. A phosphoserine mark is found at S291 and S293. A Phosphothreonine modification is found at T297. S300 and S373 each carry phosphoserine. An interaction with the nucleoprotein region spans residues A342 to I390. Residue T374 is modified to Phosphothreonine.

Belongs to the rubulavirus/avulavirus P protein family. As to quaternary structure, homotetramer. Interacts (via multimerization domain) with polymerase L; this interaction forms the polymerase L-P complex. Interacts (via N-terminus) with N0 (via Ncore); this interaction allows P to chaperon N0 to avoid N polymerization before encapsidation. Interacts (via C-terminus) with N-RNA template; this interaction positions the polymerase on the template for both transcription and replication. Interacts with host RPS6KB1 kinase; this interaction may play a role in the viral replication and transcription.

Its function is as follows. Essential cofactor of the RNA polymerase L that plays a central role in the transcription and replication by forming the polymerase complex with RNA polymerase L and recruiting L to the genomic N-RNA template for RNA synthesis. Also plays a central role in the encapsidation of nascent RNA chains by forming the encapsidation complex with the nucleocapsid protein N (N-P complex). Acts as a chaperone for newly synthesized free N protein, so-called N0, allowing encapsidation of nascent RNA chains during replication. The nucleoprotein protein N prevents excessive phosphorylation of P, which leads to down-regulation of viral transcription/ replication. Participates, together with N, in the formation of viral factories (viroplasms), which are large inclusions in the host cytoplasm where replication takes place. This is Phosphoprotein (P/V) from Homo sapiens (Human).